The primary structure comprises 103 residues: Large ribosomal subunit protein uL24 (103 aa).

It belongs to the universal ribosomal protein uL24 family. In terms of assembly, part of the 50S ribosomal subunit.

In terms of biological role, one of two assembly initiator proteins, it binds directly to the 5'-end of the 23S rRNA, where it nucleates assembly of the 50S subunit. Functionally, one of the proteins that surrounds the polypeptide exit tunnel on the outside of the subunit. In Christiangramia forsetii (strain DSM 17595 / CGMCC 1.15422 / KT0803) (Gramella forsetii), this protein is Large ribosomal subunit protein uL24.